The sequence spans 265 residues: Probable enoyl-CoA hydratase 1, peroxisomal (265 aa).

Met1 bears the N-acetylmethionine mark. Residues 68–72 and Ala112 contribute to the substrate site; that span reads SGVDL. Positions 263 to 265 match the Microbody targeting signal motif; the sequence is SKL.

It belongs to the enoyl-CoA hydratase/isomerase family.

The protein resides in the peroxisome. It catalyses the reaction a (3S)-3-hydroxyacyl-CoA = a (2E)-enoyl-CoA + H2O. It carries out the reaction a 4-saturated-(3S)-3-hydroxyacyl-CoA = a (3E)-enoyl-CoA + H2O. It participates in lipid metabolism; fatty acid beta-oxidation. Straight-chain enoyl-CoA thioesters from C4 up to at least C16 are processed, although with decreasing catalytic rate. The protein is Probable enoyl-CoA hydratase 1, peroxisomal of Arabidopsis thaliana (Mouse-ear cress).